Here is an 808-residue protein sequence, read N- to C-terminus: Probable potassium transporter 3 (808 aa).

Over 1–34 the chain is Cytoplasmic; it reads MPVADCESGLSPADVTGAGAANGNPGHWRSYYRH. Residues 35 to 55 traverse the membrane as a helical segment; it reads VLLLAYQSCGVVYGDLSTSPL. At 56–81 the chain is on the extracellular side; that stretch reads YVYKSTFIIGSLRRFQDEEIVFGVFS. Residues 82 to 102 form a helical membrane-spanning segment; sequence LVFWTLTLIPLLKYVFIVLAA. The Cytoplasmic segment spans residues 103–167; the sequence is DDNGEGGTFA…FLENHRKSRT (65 aa). The helical transmembrane segment at 168–188 threads the bilayer; that stretch reads FLLVTVLFGASLVIGDGVLTP. The Extracellular segment spans residues 189 to 204; that stretch reads PMSVLSSFSGLQVHST. Residues 205–225 form a helical membrane-spanning segment; it reads ALTSGEVEILSCTVLVCLFMV. At 226 to 232 the chain is on the cytoplasmic side; sequence QHWGTHR. The helical transmembrane segment at 233-253 threads the bilayer; sequence VAFLFAPVVIVWLLLLGALGV. The Extracellular segment spans residues 254–283; sequence YNIVVWNPRVLRALSPYYLVRFFQHTGKDG. The helical transmembrane segment at 284 to 304 threads the bilayer; that stretch reads WISLGGILLSMTGTEAMYADL. The Cytoplasmic segment spans residues 305–313; it reads GHFTAASIR. The chain crosses the membrane as a helical span at residues 314-334; the sequence is VAFVGLIYPCLVLQYMGQAAF. The Extracellular portion of the chain corresponds to 335–354; the sequence is LSKSPHCDIHFVFFESIPTG. A helical transmembrane segment spans residues 355–375; the sequence is IFWPVLVIATLAAIVGSQAVI. The Cytoplasmic portion of the chain corresponds to 376–406; the sequence is SATFSIVRQCTALGCFPRVKIVHTSRRIHGQ. A helical membrane pass occupies residues 407 to 427; it reads IYSPEINWILMLLCIAVTMGL. The Extracellular portion of the chain corresponds to 428–439; the sequence is RDTTLIGNAYGM. Residues 440 to 460 traverse the membrane as a helical segment; sequence ACAGVMLVTTLLMALVIVFVW. The Cytoplasmic segment spans residues 461 to 464; the sequence is QYSC. A helical membrane pass occupies residues 465–485; sequence LVAALFLVAFGVVEAVYLSAA. The Extracellular segment spans residues 486–491; that stretch reads LMKVPQ. A helical membrane pass occupies residues 492–512; it reads GGWLPLVLSLVFVAVMYVWHY. Residues 513–808 are Cytoplasmic-facing; sequence GTRRKHQFDV…LIEVGMIYYV (296 aa).

The protein belongs to the HAK/KUP transporter (TC 2.A.72.3) family.

The protein localises to the membrane. High-affinity potassium transporter. The sequence is that of Probable potassium transporter 3 (HAK3) from Oryza sativa subsp. japonica (Rice).